Reading from the N-terminus, the 410-residue chain is Acetyltransferase aurG (410 aa).

Transmembrane regions (helical) follow at residues 3 to 23 (LWLV…VVCF), 28 to 48 (SLVR…GLIL), and 59 to 79 (WSLV…VGLI). Residues 90–99 (TSSRGGQPNA) are compositionally biased toward polar residues. The disordered stretch occupies residues 90-112 (TSSRGGQPNASLDLAGRKKPPSS). N-linked (GlcNAc...) asparagine glycosylation is present at Asn-98. The next 4 membrane-spanning stretches (helical) occupy residues 157–177 (AMTL…GGDL), 219–239 (MYFS…MVGL), 300–320 (ILAT…YSYG), and 364–384 (IGYV…FFPL).

This sequence belongs to the wax synthase family.

The protein localises to the membrane. It functions in the pathway polyketide biosynthesis. Its function is as follows. Acetyltransferase; part of the gene cluster that mediates the biosynthesis of aurovertins, fungal polyketides that exhibit potent inhibition of adenosine triphosphate synthase. Tha biosynthesis starts with the HR-PKS aurA that selects propionate as the starter unit; synthesizes a hexa-ene chain through the repeated functions of the KR and DH domains in the first six iterations; selectively introduces three alpha-methyl substitutions at C4, C6, and C16 using the S-adensylmethionine-dependent cMET; and shuts off KR and DH in the last three iterations to afford a 1,3,5-triketo portion that can undergo intramolecular cyclization to yield the alpha-pyrone intermediate. AurE may act as a cyclase and enhances the rate of pyrone formation and product release of aurA. The methyltransferase aurB then methylates the C17 hydroxyl group. C17 methylation is required to initiate epoxidation by the downstream monooxygenase aurC. The monooxygenase aurC and the epoxide hydrolase aurD can iteratively transform the terminal triene portion of the methylated precursor into the dioxabicyclo[3.2.1]octane scaffold of aurovertin E. Epoxidation modifications of the precursor occur in two separate steps; bis-epoxidation of the two terminal olefins takes place first, followed by another epoxidation that occurs at C7-C8 after tetrahydrofuran formation. The O-acyltransferase aurG converts aurovertin E to aurovertin A. The protein is Acetyltransferase aurG of Calcarisporium arbuscula (Dendryphion arbuscula).